Here is a 345-residue protein sequence, read N- to C-terminus: N(4)-(Beta-N-acetylglucosaminyl)-L-asparaginase (345 aa).

Positions 1–23 are cleaved as a signal peptide; sequence MARKWNLPFLLLPLVLGIPLVRG. Asn-38 is a glycosylation site (N-linked (GlcNAc...) asparagine). Cys-64 and Cys-69 are joined by a disulfide. N-linked (GlcNAc...) asparagine glycosylation occurs at Asn-149. A disulfide bridge connects residues Cys-163 and Cys-179. Catalysis depends on Thr-205, which acts as the Nucleophile. Substrate-binding positions include 233-236 and 256-259; these read RVGD and TGDG. A disulfide bond links Cys-285 and Cys-305. The N-linked (GlcNAc...) asparagine glycan is linked to Asn-307. Cys-316 and Cys-344 are joined by a disulfide.

It belongs to the Ntn-hydrolase family. In terms of assembly, heterotetramer of two alpha and two beta chains arranged as a dimer of alpha/beta heterodimers. In terms of processing, N-glycosylated. Post-translationally, cleaved into an alpha and beta chain by autocatalysis; this activates the enzyme. The N-terminal residue of the beta subunit is responsible for the nucleophile hydrolase activity.

It is found in the lysosome. It carries out the reaction N(4)-(beta-N-acetyl-D-glucosaminyl)-L-asparagine + H2O = N-acetyl-beta-D-glucosaminylamine + L-aspartate + H(+). Functionally, cleaves the GlcNAc-Asn bond which joins oligosaccharides to the peptide of asparagine-linked glycoproteins. The chain is N(4)-(Beta-N-acetylglucosaminyl)-L-asparaginase (Aga) from Rattus norvegicus (Rat).